A 21-amino-acid polypeptide reads, in one-letter code: Outer membrane protein A (21 aa).

A beta stranded transmembrane segment spans residues 6 to 16; the sequence is TWYTGAKLGWS.

It belongs to the outer membrane OOP (TC 1.B.6) superfamily. OmpA family. As to quaternary structure, monomer and homodimer.

It is found in the cell outer membrane. Its function is as follows. With TolR probably plays a role in maintaining the position of the peptidoglycan cell wall in the periplasm. Acts as a porin with low permeability that allows slow penetration of small solutes; an internal gate slows down solute passage. The polypeptide is Outer membrane protein A (Actinobacillus lignieresii).